The sequence spans 74 residues: Antimicrobial peptide 2 (74 aa).

Positions 1-22 (MEIKYLLTVFLVLLIVSDHCQA) are cleaved as a signal peptide. The residue at position 40 (Lys-40) is a Lysine amide. The propeptide occupies 46–74 (DLDGQIDRSRNFRKRDAELEELLSKLPIY).

Expressed by the venom gland.

Its subcellular location is the secreted. It is found in the target cell membrane. Its function is as follows. Has antibacterial activity against the Gram-positive bacteria S.aureus (MIC=48 uM), the Gram-negative bacteria E.coli (MIC=120 uM), and the yeast C.albicans (MIC=64 uM). Causes hemolysis on horse erythrocytes. This is Antimicrobial peptide 2 from Androctonus amoreuxi (African fattail scorpion).